The primary structure comprises 476 residues: Eukaryotic translation initiation factor 3 subunit L (476 aa).

In terms of domain architecture, PCI spans 257-452 (DAIRMFSHIL…DLDYALENDL (196 aa)).

It belongs to the eIF-3 subunit L family. As to quaternary structure, component of the eukaryotic translation initiation factor 3 (eIF-3) complex.

The protein localises to the cytoplasm. Functionally, component of the eukaryotic translation initiation factor 3 (eIF-3) complex, which is involved in protein synthesis of a specialized repertoire of mRNAs and, together with other initiation factors, stimulates binding of mRNA and methionyl-tRNAi to the 40S ribosome. The eIF-3 complex specifically targets and initiates translation of a subset of mRNAs involved in cell proliferation. The sequence is that of Eukaryotic translation initiation factor 3 subunit L from Neosartorya fischeri (strain ATCC 1020 / DSM 3700 / CBS 544.65 / FGSC A1164 / JCM 1740 / NRRL 181 / WB 181) (Aspergillus fischerianus).